We begin with the raw amino-acid sequence, 1706 residues long: MGVPKFYRWISERYPCLSEVVKEHQIPEFDNLYLDMNGIIHQCSHPNDDDVHFRISDDKIFTDIFHYLEVLFRIIKPRKVFFMAVDGVAPRAKMNQQRGRRFRSAKEAEDKIKKAIEKGETLPTEARFDSNCITPGTEFMARLHEHLKYFVNMKISTDKSWQGVTIYFSGHETPGEGEHKIMEFIRSEKAKPDHDPNTRHCLYGLDADLIMLGLTSHEAHFSLLREEVRFGGKKTQRVCAPEETTFHLLHLSLMREYIDYEFSVLKEKITFKYDIERIIDDWILMGFLVGNDFIPHLPHLHINHDALPLLYGTYVTILPELGGYINESGHLNLPRFEKYLVKLSDFDREHFSEVFVDLKWFESKVGNKYLNEAAGVAAEEARNYKEKKKLKGQENSLCWTALDKNEGEMITSKDNLEDETEDDDLFETEFRQYKRTYYMTKMGVDVVSDDFLADQAACYVQAIQWILHYYYHGVQSWSWYYPYHYAPFLSDIHNISTLKIHFELGKPFKPFEQLLAVLPAASKNLLPACYQHLMTNEDSPIIEYYPPDFKTDLNGKQQEWEAVVLIPFIDEKRLLEAMETCNHSLKKEERKRNQHSECLMCWYDRDTEFIYPSPWPEKFPAIERCCTRYKIISLDAWRVDINKNKITRIDQKALYFCGFPTLKHIRHKFFLKKSGVQVFQQSSRGENMMLEILVDAESDELTVENVASSVLGKSVFVNWPHLEEARVVAVSDGETKFYLEEPPGTQKLYSGRTAPPSKVVHLGDKEQSNWAKEVQGISEHYLRRKGIIINETSAVVYAQLLTGRKYQINQNGEVRLEKQWSKQVVPFVYQTIVKDIRAFDSRFSNIKTLDDLFPLRSMVFMLGTPYYGCTGEVQDSGDVITEGRIRVIFSIPCEPNLDALIQNQHKYSIKYNPGYVLASRLGVSGYLVSRFTGSIFIGRGSRRNPHGDHKANVGLNLKFNKKNEEVPGYTKKVGSEWMYSSAAEQLLAEYLERAPELFSYIAKNSQEDVFYEDDIWPGENENGAEKVQEIITWLKGHPVSTLSRSSCDLQILDAAIVEKIEEEVEKCKQRKNNKKVRVTVKPHLLYRPLEQQHGVIPDRDAEFCLFDRVVNVRENFSVPVGLRGTIIGIKGANREADVLFEVLFDEEFPGGLTIRCSPGRGYRLPTSALVNLSHGSRSETGNQKLTAIVKPQPAVHQHSSSSSVSSGHLGALNHSPQSLFVPTQVPTKDDDEFCNIWQSLQGSGKMQYFQPTIQEKGAVLPQEISQVNQHHKSGFNDNSVKYQQRKHDPHRKFKEECKSPKAECWSQKMSNKQPNSGIENFLASLNISKENEVQSSHHGEPPSEEHLSPQSFAMGTRMLKEILKIDGSNTVDHKNEIKQIANEIPVSSNRRDEYGLPSQPKQNKKLASYMNKPHSANEYHNVQSMDNMCWPAPSQIPPVSTPVTELSRICSLVGMPQPDFSFLRMPQTMTVCQVKLSNGLLVHGPQCHSENEAKEKAALFALQQLGSLGMNFPLPSQVFANYPSAVPPGTIPPAFPPPTGWDHYGSNYALGAANIMPSSSHLFGSMPWGPSVPVPGKPFHHTLYSGTMPMAGGIPGGVHNQFIPLQVTKKRVANKKNFENKEAQSSQATPVQTSQPDSSNIVKVSPRESSSASLKSSPIAQPASSFQVETASQGHSISHHKSTPISSSRRKSRKLAVNFGVSKPSE.

Ser-1348 carries the post-translational modification Phosphoserine. The disordered stretch occupies residues 1619–1706 (ENKEAQSSQA…VNFGVSKPSE (88 aa)). Positions 1623–1642 (AQSSQATPVQTSQPDSSNIV) are enriched in polar residues. A Phosphoserine modification is found at Ser-1645. The span at 1647–1657 (RESSSASLKSS) shows a compositional bias: low complexity. Positions 1658–1676 (PIAQPASSFQVETASQGHS) are enriched in polar residues. The span at 1677-1694 (ISHHKSTPISSSRRKSRK) shows a compositional bias: basic residues.

It belongs to the 5'-3' exonuclease family. Found in a mRNP complex with UPF1, UPF2, UPF3B and XRN1. Associates with alpha and beta tubulins. Interacts with DIS3L2. Interacts with ZC3HAV1 in an RNA-dependent manner. Interacts with ZFP36L1. Interacts with TRIM71 (via NHL repeats) in an RNA-dependent manner. Interacts with YTHDC2 (via ANK repeats). Interacts with DHX34; the interaction is RNA-independent. Expressed in heart, brain, pancreas, spleen, testis, osteogenic sarcoma (OGS) biopsy and primary cell lines.

It localises to the cytoplasm. Functionally, major 5'-3' exoribonuclease involved in mRNA decay. Required for the 5'-3'-processing of the G4 tetraplex-containing DNA and RNA substrates. The kinetic of hydrolysis is faster for G4 RNA tetraplex than for G4 DNA tetraplex and monomeric RNA tetraplex. Binds to RNA and DNA. Plays a role in replication-dependent histone mRNA degradation. May act as a tumor suppressor protein in osteogenic sarcoma (OGS). In Homo sapiens (Human), this protein is 5'-3' exoribonuclease 1.